Here is a 422-residue protein sequence, read N- to C-terminus: uncharacterized protein (422 aa).

A run of 12 helical transmembrane segments spans residues 23-43 (IVKISGDMFAFNSILWFLIYD), 47-67 (AIGTALLIAVTFLPEAVLAPV), 90-110 (AIVLIIPLCHFAGFSPLWFVM), 112-132 (LMIVHSATGAAYNPASIALIP), 151-171 (AQIVRLGAVTLCGAFLTFISP), 172-192 (SYTMLIALVLYLVSGFLVLFI), 228-248 (ILYPLAIYCIFMNFAAAPWEA), 263-283 (IVYSLLKATTAAGAFLLGFVL), 291-308 (YGLLFVTAGIIEGFAFFI), 318-340 (VFFAAFTFGAAVSAVNVPEYTII), 352-372 (VYAVIHMISNISIPAGAVICG), and 381-401 (GKVIAVGGIVEIIAGIGILLF).

The protein belongs to the major facilitator superfamily.

Its subcellular location is the cell membrane. This is an uncharacterized protein from Bacillus subtilis (strain 168).